A 308-amino-acid chain; its full sequence is Porphobilinogen deaminase (308 aa).

Cysteine 241 is modified (S-(dipyrrolylmethanemethyl)cysteine).

The protein belongs to the HMBS family. As to quaternary structure, monomer. Requires dipyrromethane as cofactor.

The enzyme catalyses 4 porphobilinogen + H2O = hydroxymethylbilane + 4 NH4(+). It participates in porphyrin-containing compound metabolism; protoporphyrin-IX biosynthesis; coproporphyrinogen-III from 5-aminolevulinate: step 2/4. Functionally, tetrapolymerization of the monopyrrole PBG into the hydroxymethylbilane pre-uroporphyrinogen in several discrete steps. The sequence is that of Porphobilinogen deaminase from Staphylococcus aureus (strain MRSA252).